Reading from the N-terminus, the 359-residue chain is Guanine nucleotide-binding protein G(q) subunit alpha (359 aa).

S-palmitoyl cysteine attachment occurs at residues C9 and C10. The G-alpha domain occupies 38–359; the sequence is RELKLLLLGT…QLNLKEYNLV (322 aa). Residues 41 to 54 form a G1 motif region; it reads KLLLLGTGESGKST. GTP-binding residues include S50, G51, K52, S53, T54, S156, L180, R181, and R183. Residue S53 coordinates Mg(2+). Positions 178 to 186 are G2 motif; that stretch reads DVLRVRVPT. T186 serves as a coordination point for Mg(2+). The segment at 201–210 is G3 motif; it reads FRMVDVGGQR. Q209 is subject to 5-glutamyl histamine. The segment at 270 to 277 is G4 motif; it reads ILFLNKKD. The GTP site is built by N274, K275, D277, and A331. The tract at residues 329 to 334 is G5 motif; that stretch reads TCATDT.

The protein belongs to the G-alpha family. G(q) subfamily. In terms of assembly, g proteins are composed of 3 units; alpha, beta and gamma. The alpha chain contains the guanine nucleotide binding site. Interacts (GDP-bound form) with RIC8A (via C-terminus); promoting GNAQ folding and association with the plasma membrane. Binds NHERF1. Forms a complex with PECAM1 and BDKRB2. Interacts with GAS2L2. In terms of processing, palmitoylated by ZDHHC3 and ZDHHC7. Palmitoylation occurs in the Golgi and participates in the localization of GNAQ to the plasma membrane. Histaminylated at Gln-209 residues by TGM2.

The protein localises to the cell membrane. It localises to the golgi apparatus. Its subcellular location is the nucleus. It is found in the nucleus membrane. It catalyses the reaction GTP + H2O = GDP + phosphate + H(+). Functionally, guanine nucleotide-binding proteins (G proteins) function as transducers downstream of G protein-coupled receptors (GPCRs) in numerous signaling cascades. The alpha chain contains the guanine nucleotide binding site and alternates between an active, GTP-bound state and an inactive, GDP-bound state. Signaling by an activated GPCR promotes GDP release and GTP binding. The alpha subunit has a low GTPase activity that converts bound GTP to GDP, thereby terminating the signal. Both GDP release and GTP hydrolysis are modulated by numerous regulatory proteins. Signaling is mediated via phospholipase C-beta-dependent inositol lipid hydrolysis for signal propagation: activates phospholipase C-beta: following GPCR activation, GNAQ activates PLC-beta (PLCB1, PLCB2, PLCB3 or PLCB4), leading to production of diacylglycerol (DAG) and inositol 1,4,5-trisphosphate (IP3). Required for platelet activation. Regulates B-cell selection and survival and is required to prevent B-cell-dependent autoimmunity. Regulates chemotaxis of BM-derived neutrophils and dendritic cells (in vitro). Transduces FFAR4 signaling in response to long-chain fatty acids (LCFAs). Together with GNA11, required for heart development. The polypeptide is Guanine nucleotide-binding protein G(q) subunit alpha (Gnaq) (Rattus norvegicus (Rat)).